The chain runs to 305 residues: RxLR effector protein PexRD25 (305 aa).

Residues 1–16 (MRFLFYMLLACSAVVA) form the signal peptide. The short motif at 44 to 56 (RLLRDRRSVDEER) is the RxLR-dEER element.

The protein belongs to the RxLR effector family.

The protein localises to the secreted. It is found in the host nucleus. Its subcellular location is the host nucleolus. Its function is as follows. Effector that enhances P.infestans colonization of Nicotiana benthamiana leaves. This chain is RxLR effector protein PexRD25, found in Phytophthora infestans (strain T30-4) (Potato late blight agent).